Consider the following 291-residue polypeptide: MIIDELYETVNKKGNVCVGLDTALSYIPESMRESHENVEDCIFEFNRTIIDSTLDAAACYKVQIAYYEALGIEGLRAYSKTLKYIKDKKALSIADIKRGDIAKTAEMYAKAHFEGEFESDFVTLNPYMGFDTIEPYLPYVKNNNKGLFILIRTSNKGAKDLQYISTRKNTKLYNIVGKKVSSLGEKYMGNCGYSSLGGVMGCTHQEEGIKLRKKLKNIFFLIPGYGAQGGTAEDISAYLKRGNGGVVNSSRGILLAYKKEEDGFKKYGECARQECVKIRDDILKISQNKNS.

Lysine 97 functions as the Proton donor in the catalytic mechanism.

Belongs to the OMP decarboxylase family. Type 2 subfamily.

The catalysed reaction is orotidine 5'-phosphate + H(+) = UMP + CO2. It functions in the pathway pyrimidine metabolism; UMP biosynthesis via de novo pathway; UMP from orotate: step 2/2. This Clostridium kluyveri (strain ATCC 8527 / DSM 555 / NBRC 12016 / NCIMB 10680 / K1) protein is Orotidine 5'-phosphate decarboxylase.